Here is a 502-residue protein sequence, read N- to C-terminus: Glycerol kinase (502 aa).

Threonine 14 serves as a coordination point for ADP. Residues threonine 14, threonine 15, and serine 16 each coordinate ATP. Threonine 14 provides a ligand contact to sn-glycerol 3-phosphate. ADP is bound at residue arginine 18. 3 residues coordinate sn-glycerol 3-phosphate: arginine 84, glutamate 85, and tyrosine 136. Arginine 84, glutamate 85, and tyrosine 136 together coordinate glycerol. Position 232 is a phosphohistidine; by HPr (histidine 232). A sn-glycerol 3-phosphate-binding site is contributed by aspartate 246. Positions 246 and 247 each coordinate glycerol. Threonine 268 and glycine 311 together coordinate ADP. Threonine 268, glycine 311, glutamine 315, and glycine 412 together coordinate ATP. ADP-binding residues include glycine 412 and asparagine 416.

It belongs to the FGGY kinase family. As to quaternary structure, homotetramer and homodimer (in equilibrium). In terms of processing, the phosphoenolpyruvate-dependent sugar phosphotransferase system (PTS), including enzyme I, and histidine-containing protein (HPr) are required for the phosphorylation, which leads to the activation of the enzyme.

It catalyses the reaction glycerol + ATP = sn-glycerol 3-phosphate + ADP + H(+). Its pathway is polyol metabolism; glycerol degradation via glycerol kinase pathway; sn-glycerol 3-phosphate from glycerol: step 1/1. With respect to regulation, activated by phosphorylation and inhibited by fructose 1,6-bisphosphate (FBP). Functionally, key enzyme in the regulation of glycerol uptake and metabolism. Catalyzes the phosphorylation of glycerol to yield sn-glycerol 3-phosphate. This Streptococcus pneumoniae serotype 19F (strain G54) protein is Glycerol kinase.